The chain runs to 346 residues: Large ribosomal subunit protein uL3 (346 aa).

The tract at residues 324–346 (RPPKKKPPVERPQITYVSRESKQ) is disordered.

The protein belongs to the universal ribosomal protein uL3 family. In terms of assembly, part of the 50S ribosomal subunit. Forms a cluster with proteins L14 and L24e.

Functionally, one of the primary rRNA binding proteins, it binds directly near the 3'-end of the 23S rRNA, where it nucleates assembly of the 50S subunit. This Thermococcus kodakarensis (strain ATCC BAA-918 / JCM 12380 / KOD1) (Pyrococcus kodakaraensis (strain KOD1)) protein is Large ribosomal subunit protein uL3.